Here is a 130-residue protein sequence, read N- to C-terminus: DNA-directed RNA polymerase subunit omega (130 aa).

The interval 110-130 (EELLKGLEGLAPPEEQPEEDE) is disordered.

Belongs to the RNA polymerase subunit omega family. The RNAP catalytic core consists of 2 alpha, 1 beta, 1 beta' and 1 omega subunit. When a sigma factor is associated with the core the holoenzyme is formed, which can initiate transcription.

The enzyme catalyses RNA(n) + a ribonucleoside 5'-triphosphate = RNA(n+1) + diphosphate. Its function is as follows. Promotes RNA polymerase assembly. Latches the N- and C-terminal regions of the beta' subunit thereby facilitating its interaction with the beta and alpha subunits. This is DNA-directed RNA polymerase subunit omega from Bradyrhizobium sp. (strain BTAi1 / ATCC BAA-1182).